We begin with the raw amino-acid sequence, 701 residues long: Elongation factor G (701 aa).

Positions 8–290 (ARYRNIGISA…AVIEYLPAPT (283 aa)) constitute a tr-type G domain. GTP-binding positions include 17–24 (AHIDAGKT), 88–92 (DTPGH), and 142–145 (NKMD).

It belongs to the TRAFAC class translation factor GTPase superfamily. Classic translation factor GTPase family. EF-G/EF-2 subfamily.

It is found in the cytoplasm. Its function is as follows. Catalyzes the GTP-dependent ribosomal translocation step during translation elongation. During this step, the ribosome changes from the pre-translocational (PRE) to the post-translocational (POST) state as the newly formed A-site-bound peptidyl-tRNA and P-site-bound deacylated tRNA move to the P and E sites, respectively. Catalyzes the coordinated movement of the two tRNA molecules, the mRNA and conformational changes in the ribosome. The chain is Elongation factor G from Sodalis glossinidius (strain morsitans).